A 500-amino-acid polypeptide reads, in one-letter code: Glutelin type-B 4 (500 aa).

The N-terminal stretch at 1-24 (MATIAFSRLSIYFCVLLLCHGSMA) is a signal peptide. Disulfide bonds link Cys-45/Cys-78 and Cys-121/Cys-310. Cupin type-1 domains follow at residues 50-245 (LQAF…LVAK) and 316-465 (LNIE…EQAR). The span at 481–493 (RYQQQTYPGFSNE) shows a compositional bias: polar residues. Residues 481–500 (RYQQQTYPGFSNESENEALE) are disordered.

The protein belongs to the 11S seed storage protein (globulins) family. As to quaternary structure, hexamer; each subunit is composed of an acidic and a basic chain derived from a single precursor and linked by a disulfide bond. In terms of tissue distribution, expressed in endosperm (at protein level).

In terms of biological role, seed storage protein. The chain is Glutelin type-B 4 (GLUB4) from Oryza sativa subsp. japonica (Rice).